Consider the following 482-residue polypeptide: MEEWVEKYRPKSLNDVAGHNKTKESLIEWIESFINGQKQKPILLAGPPGSGKTTLAYAIAKDYAFDVIELNASDKRNKDVISQVVGTAATSKSLTGKRTLIVLDEVDGLSGNDDRGGVAEIIKVLKTAENPVILTANDVYKPALMTLRNSVNLINVGSVHTNSIPPVLRKIALKEGFEIDEKVIKTIASHAGGDLRAAINDLQSLATGGSIEVEDAKELPDRDSEKSIFDAMRIIMKTTHYDIATSATRDVKEELGTIEEWISENLPKEYLKYKDLANGYDYLSKSDVFLGRVFRRQYFGLWRYASALMTAGTALAKEEKYRGFTRYAPPAIFTKLSRTKGSRQRMKDILKKIALKTHTSTKRARNTLDYMVVVFESNEAVSAELVEYYELTKEEIEFLTNKTIAKNIFSVIAGKKPKVEKETPKKKKKAEDVVPIIPKRPKISEPPKEPLKEVIEETVEKTDKKEKEKKDPKKQATLDSFF.

ATP is bound at residue 46-53; sequence GPPGSGKT. The segment at 420–482 is disordered; the sequence is EKETPKKKKK…KKQATLDSFF (63 aa). Positions 442–476 are enriched in basic and acidic residues; the sequence is KISEPPKEPLKEVIEETVEKTDKKEKEKKDPKKQA.

The protein belongs to the activator 1 small subunits family. RfcL subfamily. Heteromultimer composed of small subunits (RfcS) and large subunits (RfcL).

Functionally, part of the RFC clamp loader complex which loads the PCNA sliding clamp onto DNA. The polypeptide is Replication factor C large subunit (Methanococcus maripaludis (strain C7 / ATCC BAA-1331)).